Here is a 175-residue protein sequence, read N- to C-terminus: ATP synthase subunit delta (175 aa).

It belongs to the ATPase delta chain family. F-type ATPases have 2 components, F(1) - the catalytic core - and F(0) - the membrane proton channel. F(1) has five subunits: alpha(3), beta(3), gamma(1), delta(1), epsilon(1). F(0) has three main subunits: a(1), b(2) and c(10-14). The alpha and beta chains form an alternating ring which encloses part of the gamma chain. F(1) is attached to F(0) by a central stalk formed by the gamma and epsilon chains, while a peripheral stalk is formed by the delta and b chains.

Its subcellular location is the cell inner membrane. Its function is as follows. F(1)F(0) ATP synthase produces ATP from ADP in the presence of a proton or sodium gradient. F-type ATPases consist of two structural domains, F(1) containing the extramembraneous catalytic core and F(0) containing the membrane proton channel, linked together by a central stalk and a peripheral stalk. During catalysis, ATP synthesis in the catalytic domain of F(1) is coupled via a rotary mechanism of the central stalk subunits to proton translocation. Functionally, this protein is part of the stalk that links CF(0) to CF(1). It either transmits conformational changes from CF(0) to CF(1) or is implicated in proton conduction. The polypeptide is ATP synthase subunit delta (Xanthomonas euvesicatoria pv. vesicatoria (strain 85-10) (Xanthomonas campestris pv. vesicatoria)).